Here is a 547-residue protein sequence, read N- to C-terminus: ATP synthase subunit alpha (547 aa).

ATP is bound at residue 173–180; the sequence is GDRQTGKT.

Belongs to the ATPase alpha/beta chains family. In terms of assembly, F-type ATPases have 2 components, CF(1) - the catalytic core - and CF(0) - the membrane proton channel. CF(1) has five subunits: alpha(3), beta(3), gamma(1), delta(1), epsilon(1). CF(0) has three main subunits: a(1), b(2) and c(9-12). The alpha and beta chains form an alternating ring which encloses part of the gamma chain. CF(1) is attached to CF(0) by a central stalk formed by the gamma and epsilon chains, while a peripheral stalk is formed by the delta and b chains.

It is found in the cell membrane. It carries out the reaction ATP + H2O + 4 H(+)(in) = ADP + phosphate + 5 H(+)(out). Functionally, produces ATP from ADP in the presence of a proton gradient across the membrane. The alpha chain is a regulatory subunit. The sequence is that of ATP synthase subunit alpha from Thermobifida fusca (strain YX).